A 441-amino-acid polypeptide reads, in one-letter code: Peroxisomal biogenesis factor 3 (441 aa).

Topologically, residues 1–17 (MAPNQRSRSLLQRHRGK) are peroxisomal. A helical transmembrane segment spans residues 18–39 (VLISLTGIAALFTTGSVVVFFV). The Cytoplasmic portion of the chain corresponds to 40–441 (KRWLYKQQLR…GVSSSFSFKP (402 aa)).

Belongs to the peroxin-3 family. As to quaternary structure, interacts with MSP1; leading to inhibit the translocase activity of MSP1.

The protein resides in the peroxisome membrane. In terms of biological role, involved in peroxisome biosynthesis. Acts as a regulator of MSP1 by inhibiting the ability of MSP1 to unfold target proteins. In Saccharomyces cerevisiae (strain ATCC 204508 / S288c) (Baker's yeast), this protein is Peroxisomal biogenesis factor 3 (PEX3).